The chain runs to 177 residues: CDP-archaeol synthase (177 aa).

The next 5 membrane-spanning stretches (helical) occupy residues 6-26 (LFAS…ACIF), 54-74 (CIFG…LVDF), 90-110 (VILA…GSFI), 124-144 (LLDQ…VAPI), and 148-168 (MIII…IIAY).

It belongs to the CDP-archaeol synthase family. It depends on Mg(2+) as a cofactor.

It is found in the cell membrane. It catalyses the reaction 2,3-bis-O-(geranylgeranyl)-sn-glycerol 1-phosphate + CTP + H(+) = CDP-2,3-bis-O-(geranylgeranyl)-sn-glycerol + diphosphate. It functions in the pathway membrane lipid metabolism; glycerophospholipid metabolism. Its function is as follows. Catalyzes the formation of CDP-2,3-bis-(O-geranylgeranyl)-sn-glycerol (CDP-archaeol) from 2,3-bis-(O-geranylgeranyl)-sn-glycerol 1-phosphate (DGGGP) and CTP. This reaction is the third ether-bond-formation step in the biosynthesis of archaeal membrane lipids. This Methanocaldococcus jannaschii (strain ATCC 43067 / DSM 2661 / JAL-1 / JCM 10045 / NBRC 100440) (Methanococcus jannaschii) protein is CDP-archaeol synthase.